Consider the following 621-residue polypeptide: 1-deoxy-D-xylulose-5-phosphate synthase (621 aa).

Residues His-80 and 121 to 123 (GHS) contribute to the thiamine diphosphate site. Asp-152 lines the Mg(2+) pocket. Residues 153-154 (GA), Asn-181, Tyr-288, and Glu-370 each bind thiamine diphosphate. Asn-181 contributes to the Mg(2+) binding site.

Belongs to the transketolase family. DXPS subfamily. In terms of assembly, homodimer. It depends on Mg(2+) as a cofactor. The cofactor is thiamine diphosphate.

It carries out the reaction D-glyceraldehyde 3-phosphate + pyruvate + H(+) = 1-deoxy-D-xylulose 5-phosphate + CO2. Its pathway is metabolic intermediate biosynthesis; 1-deoxy-D-xylulose 5-phosphate biosynthesis; 1-deoxy-D-xylulose 5-phosphate from D-glyceraldehyde 3-phosphate and pyruvate: step 1/1. Catalyzes the acyloin condensation reaction between C atoms 2 and 3 of pyruvate and glyceraldehyde 3-phosphate to yield 1-deoxy-D-xylulose-5-phosphate (DXP). In Vibrio vulnificus (strain CMCP6), this protein is 1-deoxy-D-xylulose-5-phosphate synthase.